The sequence spans 162 residues: Xylulose kinase (162 aa).

The segment at 16–39 (GGHSATPRPATGPAGPAAHSGRHQ) is disordered. Low complexity predominate over residues 20 to 33 (ATPRPATGPAGPAA).

The protein belongs to the FGGY kinase family.

It carries out the reaction D-xylulose + ATP = D-xylulose 5-phosphate + ADP + H(+). Catalyzes the phosphorylation of D-xylulose to D-xylulose 5-phosphate. This is Xylulose kinase from Actinoplanes sp. (strain ATCC 31351 / 3876) (Ampullariella sp.).